Here is a 299-residue protein sequence, read N- to C-terminus: Bifunctional protein FolD 2 (299 aa).

NADP(+) contacts are provided by residues 168–170 (GRS), Ser193, and Ile234.

Belongs to the tetrahydrofolate dehydrogenase/cyclohydrolase family. In terms of assembly, homodimer.

It catalyses the reaction (6R)-5,10-methylene-5,6,7,8-tetrahydrofolate + NADP(+) = (6R)-5,10-methenyltetrahydrofolate + NADPH. The enzyme catalyses (6R)-5,10-methenyltetrahydrofolate + H2O = (6R)-10-formyltetrahydrofolate + H(+). The protein operates within one-carbon metabolism; tetrahydrofolate interconversion. Functionally, catalyzes the oxidation of 5,10-methylenetetrahydrofolate to 5,10-methenyltetrahydrofolate and then the hydrolysis of 5,10-methenyltetrahydrofolate to 10-formyltetrahydrofolate. The sequence is that of Bifunctional protein FolD 2 from Rhizobium meliloti (strain 1021) (Ensifer meliloti).